A 469-amino-acid polypeptide reads, in one-letter code: Aspartyl/glutamyl-tRNA(Asn/Gln) amidotransferase subunit B (469 aa).

It belongs to the GatB/GatE family. GatB subfamily. As to quaternary structure, heterotrimer of A, B and C subunits.

The enzyme catalyses L-glutamyl-tRNA(Gln) + L-glutamine + ATP + H2O = L-glutaminyl-tRNA(Gln) + L-glutamate + ADP + phosphate + H(+). It catalyses the reaction L-aspartyl-tRNA(Asn) + L-glutamine + ATP + H2O = L-asparaginyl-tRNA(Asn) + L-glutamate + ADP + phosphate + 2 H(+). Functionally, allows the formation of correctly charged Asn-tRNA(Asn) or Gln-tRNA(Gln) through the transamidation of misacylated Asp-tRNA(Asn) or Glu-tRNA(Gln) in organisms which lack either or both of asparaginyl-tRNA or glutaminyl-tRNA synthetases. The reaction takes place in the presence of glutamine and ATP through an activated phospho-Asp-tRNA(Asn) or phospho-Glu-tRNA(Gln). This chain is Aspartyl/glutamyl-tRNA(Asn/Gln) amidotransferase subunit B, found in Methanococcus maripaludis (strain C5 / ATCC BAA-1333).